Here is a 621-residue protein sequence, read N- to C-terminus: NADPH-dependent diflavin oxidoreductase 1 (621 aa).

Residues 6–168 (IAVLYGSETG…VYFEFEKRII (163 aa)) enclose the Flavodoxin-like domain. FMN-binding positions include 12–17 (SETGNA), 59–62 (STTG), 106–115 (LGDSSYPKFN), and Glu142. An FAD-binding FR-type domain is found at 224 to 489 (KLIKTGTITL…VGPGVGLAPL (266 aa)). Residues Arg381, 411 to 414 (RLYS), and 443 to 446 (GVCT) contribute to the FAD site. NADP(+) contacts are provided by residues 536-537 (SR) and 545-549 (TKYVQ). Trp621 contacts FAD.

This sequence belongs to the NADPH-dependent diflavin oxidoreductase NDOR1 family. In the N-terminal section; belongs to the flavodoxin family. It in the C-terminal section; belongs to the flavoprotein pyridine nucleotide cytochrome reductase family. In terms of assembly, interacts with DRE2; as part of the cytosolic iron-sulfur (Fe-S) protein assembly (CIA) machinery. FAD serves as cofactor. FMN is required as a cofactor.

It localises to the cytoplasm. Its subcellular location is the mitochondrion. The catalysed reaction is 2 oxidized [2Fe-2S]-[protein] + NADPH = 2 reduced [2Fe-2S]-[protein] + NADP(+) + H(+). Functionally, NADPH-dependent reductase which is a central component of the cytosolic iron-sulfur (Fe-S) protein assembly (CIA) machinery. Transfers electrons from NADPH via its FAD and FMN prosthetic groups to the [2Fe-2S] cluster of DRE2, another key component of the CIA machinery. In turn, this reduced cluster provides electrons for assembly of cytosolic iron-sulfur cluster proteins. Positively controls H(2)O(2)-induced cell death. The polypeptide is NADPH-dependent diflavin oxidoreductase 1 (Candida glabrata (strain ATCC 2001 / BCRC 20586 / JCM 3761 / NBRC 0622 / NRRL Y-65 / CBS 138) (Yeast)).